Here is a 176-residue protein sequence, read N- to C-terminus: Sperm-egg fusion protein TMEM95 (176 aa).

The signal sequence occupies residues 1-16 (MWVLALGGAFLAVAKA). 4 disulfides stabilise this stretch: cysteine 17-cysteine 119, cysteine 20-cysteine 122, cysteine 106-cysteine 129, and cysteine 110-cysteine 135. Topologically, residues 17–146 (CIFCRLQDHA…PDSHDLWDAR (130 aa)) are extracellular. 2 N-linked (GlcNAc...) asparagine glycosylation sites follow: asparagine 36 and asparagine 118. A helical transmembrane segment spans residues 147-167 (ILLLCIFGIVLLSGVVSLQVE). At 168-176 (YLNLQAKDL) the chain is on the cytoplasmic side.

This sequence belongs to the TMEM95 family. In terms of assembly, does not interact with sperm-egg fusion proteins IZUMO1 or IZUMO1R/JUNO. Post-translationally, N-glycosylated. As to expression, expressed exclusively in testis.

Its subcellular location is the cytoplasmic vesicle. It localises to the secretory vesicle. It is found in the acrosome membrane. Sperm protein required for fusion of sperm with the egg membrane during fertilization. This chain is Sperm-egg fusion protein TMEM95, found in Mus musculus (Mouse).